A 390-amino-acid chain; its full sequence is MTGIRAIFYYFLVDLLTLLCWAQGKGGQHFGSTVVVSDVNLSNHGDQGSSEPPQTAEGCRGYFDVMGQWDPPFNCSSGEFLYCCGTCGFRYCCKFKQARLDQNTCTNYDRPVWLQPGKTPPKIDDPSHDPTRDKTNLIVYIICGVVAVMVLVGIFTKLGLEKAHRPQRENMSRALADVMRQQSHCATEHTERDPNLVIHVQHYETMPSRSSANNLHSSKINNVVPTSPHLPQMAHPHSYPTMGQISNPYEQQPPGKELNKYASLKAVAEKGNDDFYSKRRHLAELAAKGSLPLHPVRVDQERSYSPEGGTLKVNGQKAKANKIHTHPLASTYNPDYKTWDHSEHSLRRQAYATKKHCPVESVNEPLQSQNQHFMPSQPYFVTNSKTEVTV.

An N-terminal signal peptide occupies residues 1–22 (MTGIRAIFYYFLVDLLTLLCWA). The Extracellular portion of the chain corresponds to 23-134 (QGKGGQHFGS…DPSHDPTRDK (112 aa)). N-linked (GlcNAc...) asparagine glycosylation is found at N40 and N74. Residues 135–155 (TNLIVYIICGVVAVMVLVGIF) traverse the membrane as a helical segment. Over 156–390 (TKLGLEKAHR…VTNSKTEVTV (235 aa)) the chain is Cytoplasmic.

The protein belongs to the shisa family. SHISA9 subfamily. In terms of assembly, component of some AMPA receptors (ionotropic glutamate receptors) complex.

It localises to the cell projection. It is found in the dendritic spine membrane. The protein localises to the synapse. Functionally, regulator of short-term neuronal synaptic plasticity in the dentate gyrus. Associates with AMPA receptors (ionotropic glutamate receptors) in synaptic spines and promotes AMPA receptor desensitization at excitatory synapses. This chain is Protein shisa-9 (shisa9), found in Xenopus tropicalis (Western clawed frog).